The sequence spans 23 residues: Fimbrial protein (23 aa).

Residues C8 and C21 are joined by a disulfide bond.

This sequence belongs to the N-Me-Phe pilin family. As to quaternary structure, the pili are polar flexible filaments of about 5.4 nanometers diameter and 2.5 micrometers average length; they consist of only a single polypeptide chain arranged in a helical configuration of five subunits per turn in the assembled pilus.

The protein localises to the fimbrium. In Pseudomonas aeruginosa, this protein is Fimbrial protein (pil).